Consider the following 427-residue polypeptide: Histidinol dehydrogenase (427 aa).

3 residues coordinate NAD(+): Tyr125, Gln186, and Asn209. Substrate is bound by residues Ser234, Gln256, and His259. Positions 256 and 259 each coordinate Zn(2+). Catalysis depends on proton acceptor residues Glu325 and His326. His326, Asp359, Glu413, and His419 together coordinate substrate. Zn(2+) is bound at residue Asp359. His419 is a Zn(2+) binding site.

Belongs to the histidinol dehydrogenase family. It depends on Zn(2+) as a cofactor.

It catalyses the reaction L-histidinol + 2 NAD(+) + H2O = L-histidine + 2 NADH + 3 H(+). The protein operates within amino-acid biosynthesis; L-histidine biosynthesis; L-histidine from 5-phospho-alpha-D-ribose 1-diphosphate: step 9/9. Its function is as follows. Catalyzes the sequential NAD-dependent oxidations of L-histidinol to L-histidinaldehyde and then to L-histidine. The sequence is that of Histidinol dehydrogenase from Leptospira interrogans serogroup Icterohaemorrhagiae serovar copenhageni (strain Fiocruz L1-130).